Here is a 639-residue protein sequence, read N- to C-terminus: tRNA uridine 5-carboxymethylaminomethyl modification enzyme MnmG (639 aa).

15–20 (GAGHAG) provides a ligand contact to FAD. 276–290 (GPRYCPSIEDKIVRF) is a binding site for NAD(+).

Belongs to the MnmG family. Homodimer. Heterotetramer of two MnmE and two MnmG subunits. FAD serves as cofactor.

The protein resides in the cytoplasm. In terms of biological role, NAD-binding protein involved in the addition of a carboxymethylaminomethyl (cmnm) group at the wobble position (U34) of certain tRNAs, forming tRNA-cmnm(5)s(2)U34. The polypeptide is tRNA uridine 5-carboxymethylaminomethyl modification enzyme MnmG (Streptococcus gordonii (strain Challis / ATCC 35105 / BCRC 15272 / CH1 / DL1 / V288)).